The chain runs to 490 residues: Thiamine biosynthesis bifunctional protein ThiED (490 aa).

The segment at 1 to 213 is thiamine-phosphate synthase; sequence MASNGHTLRL…PDPALAATEI (213 aa). 4-amino-2-methyl-5-(diphosphooxymethyl)pyrimidine is bound by residues 50-54 and asparagine 82; that span reads QYRNK. Aspartate 83 and aspartate 102 together coordinate Mg(2+). Serine 121 contacts 4-amino-2-methyl-5-(diphosphooxymethyl)pyrimidine. 147-149 is a binding site for 2-[(2R,5Z)-2-carboxy-4-methylthiazol-5(2H)-ylidene]ethyl phosphate; sequence SRS. Lysine 150 lines the 4-amino-2-methyl-5-(diphosphooxymethyl)pyrimidine pocket. 2-[(2R,5Z)-2-carboxy-4-methylthiazol-5(2H)-ylidene]ethyl phosphate contacts are provided by residues glycine 177 and 197–198; that span reads IS. The interval 229-490 is hydroxymethylpyrimidine/phosphomethylpyrimidine kinase; it reads LTVAGSDSGG…ILAAEDVRDR (262 aa). Glutamine 266 serves as a coordination point for 4-amino-5-hydroxymethyl-2-methylpyrimidine.

It in the N-terminal section; belongs to the thiamine-phosphate synthase family. In the C-terminal section; belongs to the ThiD family. Mg(2+) is required as a cofactor.

It catalyses the reaction 2-[(2R,5Z)-2-carboxy-4-methylthiazol-5(2H)-ylidene]ethyl phosphate + 4-amino-2-methyl-5-(diphosphooxymethyl)pyrimidine + 2 H(+) = thiamine phosphate + CO2 + diphosphate. It carries out the reaction 2-(2-carboxy-4-methylthiazol-5-yl)ethyl phosphate + 4-amino-2-methyl-5-(diphosphooxymethyl)pyrimidine + 2 H(+) = thiamine phosphate + CO2 + diphosphate. The enzyme catalyses 4-methyl-5-(2-phosphooxyethyl)-thiazole + 4-amino-2-methyl-5-(diphosphooxymethyl)pyrimidine + H(+) = thiamine phosphate + diphosphate. The catalysed reaction is 4-amino-5-hydroxymethyl-2-methylpyrimidine + ATP = 4-amino-2-methyl-5-(phosphooxymethyl)pyrimidine + ADP + H(+). It catalyses the reaction 4-amino-2-methyl-5-(phosphooxymethyl)pyrimidine + ATP = 4-amino-2-methyl-5-(diphosphooxymethyl)pyrimidine + ADP. It participates in cofactor biosynthesis; thiamine diphosphate biosynthesis; 4-amino-2-methyl-5-diphosphomethylpyrimidine from 5-amino-1-(5-phospho-D-ribosyl)imidazole: step 3/3. The protein operates within cofactor biosynthesis; thiamine diphosphate biosynthesis; thiamine phosphate from 4-amino-2-methyl-5-diphosphomethylpyrimidine and 4-methyl-5-(2-phosphoethyl)-thiazole: step 1/1. Functionally, condenses 4-methyl-5-(beta-hydroxyethyl)thiazole monophosphate (THZ-P) and 2-methyl-4-amino-5-hydroxymethyl pyrimidine pyrophosphate (HMP-PP) to form thiamine monophosphate (TMP). In terms of biological role, catalyzes the phosphorylation of hydroxymethylpyrimidine phosphate (HMP-P) to HMP-PP, and of HMP to HMP-P. In Geobacter sulfurreducens (strain ATCC 51573 / DSM 12127 / PCA), this protein is Thiamine biosynthesis bifunctional protein ThiED (thiDE).